We begin with the raw amino-acid sequence, 80 residues long: Cell division protein ZapB (80 aa).

Residues Phe3–Gln80 adopt a coiled-coil conformation.

The protein belongs to the ZapB family. Homodimer. The ends of the coiled-coil dimer bind to each other, forming polymers. Interacts with FtsZ.

The protein resides in the cytoplasm. Functionally, non-essential, abundant cell division factor that is required for proper Z-ring formation. It is recruited early to the divisome by direct interaction with FtsZ, stimulating Z-ring assembly and thereby promoting cell division earlier in the cell cycle. Its recruitment to the Z-ring requires functional FtsA or ZipA. This chain is Cell division protein ZapB, found in Proteus mirabilis (strain HI4320).